The chain runs to 3473 residues: Genome polyprotein (3473 aa).

A coiled-coil region spans residues 514 to 604 (EVQDALEKSM…RNDIEALKKK (91 aa)). Disordered regions lie at residues 602-644 (KKKP…SEAQ) and 1278-1306 (YLADEQPTTSAPRTSIVNTEDDPPTEGEI). Composition is skewed to polar residues over residues 607-622 (QSVTPLPSPSGNSGTA) and 1278-1295 (YLADEQPTTSAPRTSIVN). Helical transmembrane passes span 1496–1516 (DKWIWAALASILVGAALLHYY) and 1595–1615 (MSSLLTILSVVASLVMWGKIP). The SF3 helicase domain occupies 1751 to 1917 (LELMNESYTY…PDVPKNEANP (167 aa)). 1777–1784 (GAPGVGKS) lines the ATP pocket. A helical transmembrane segment spans residues 2363–2383 (ILLAIGASVAVAGVAVGAVIL). Over residues 2394 to 2404 (EDEEIEGEEGE) the composition is skewed to acidic residues. Disordered stretches follow at residues 2394–2415 (EDEEIEGEEGETQASGAHESDG) and 2438–2465 (VAEAHEEKDAEKPRKSGNPTRKSYLGLS). Positions 2438–2451 (VAEAHEEKDAEKPR) are enriched in basic and acidic residues. In terms of domain architecture, Peptidase C3 spans 2632–2850 (GVDRDLSMTN…YAETLTQEHL (219 aa)). Residues His2680, Glu2717, and Cys2811 each act as for picornain 3C-like protease activity in the active site. In terms of domain architecture, RdRp catalytic spans 3155 to 3286 (TKGFAGDYSK…SVHEEFLDVY (132 aa)).

Specific enzymatic cleavages by picornain 3C-like protease in vivo yield mature proteins. Picornain 3C-like protease is autocatalytically processed.

Its subcellular location is the virion. It is found in the host membrane. It carries out the reaction RNA(n) + a ribonucleoside 5'-triphosphate = RNA(n+1) + diphosphate. Its function is as follows. Picornain 3C-like protease is a thiol protease that probably cleaves the polyprotein. This Oryza sativa (Rice) protein is Genome polyprotein.